A 179-amino-acid chain; its full sequence is Small ribosomal subunit protein eS10x (179 aa).

The tract at residues 90–179 (TLKKSAKPGG…AAAPSGSGLP (90 aa)) is disordered. The segment covering 108 to 129 (DRSRGPRHEGGDRPRFGDRDGY) has biased composition (basic and acidic residues). The segment covering 134–144 (RAGGEFGGEKG) has biased composition (gly residues). A compositionally biased stretch (low complexity) spans 145-156 (GAPADYQPSFQG). The span at 157–167 (SGRGFGRGAGG) shows a compositional bias: gly residues. Low complexity predominate over residues 168–179 (YSAAAPSGSGLP).

It belongs to the eukaryotic ribosomal protein eS10 family.

It is found in the cytoplasm. This chain is Small ribosomal subunit protein eS10x (RPS10C), found in Arabidopsis thaliana (Mouse-ear cress).